A 939-amino-acid chain; its full sequence is MPAVSKGDGMRGLAVFISDIRNCKSKEAEIKRINKELANIRSKFKGDKALDGYSKKKYVCKLLFIFLLGHDIDFGHMEAVNLLSSNRYTEKQIGYLFISVLVNSNSELIRLINNAIKNDLASRNPTFMGLALHCIASVGSREMAEAFAGEIPKVLVAGDTMDSVKQSAALCLLRLYRTSPDLVPMGDWTSRVVHLLNDQHLGVVTAATSLITTLAQKNPEEFKTSVSLAVSRLSRIVTSASTDLQDYTYYFVPAPWLSVKLLRLLQCYPPPDPAVRGRLTECLETILNKAQEPPKSKKVQHSNAKNAVLFEAISLIIHHDSEPNLLVRACNQLGQFLQHRETNLRYLALESMCTLASSEFSHEAVKTHIETVINALKTERDVSVRQRAVDLLYAMCDRSNAPQIVAEMLSYLETADYSIREEIVLKVAILAEKYAVDYTWYVDTILNLIRIAGDYVSEEVWYRVIQIVINRDDVQGYAAKTVFEALQAPACHENLVKVGGYILGEFGNLIAGDPRSSPLIQFHLLHSKFHLCSVPTRALLLSTYIKFVNLFPEVKPTIQDVLRSDSQLRNADVELQQRAVEYLRLSTVASTDILATVLEEMPPFPERESSILAKLKKKKGPSTVTDLEDTKRDRSVDVNGGPEPAPASTSAVSTPSPSADLLGLGAAPPAPAGPPPSSGGSGLLVDVFSDSASVVAPLAPGSEDNFARFVCKNNGVLFENQLLQIGLKSEFRQNLGRMFIFYGNKTSTQFLNFTPTLICSDDLQPNLNLQTKPVDPTVEGGAQVQQVVNIECVSDFTEAPVLNIQFRYGGTFQNVSVQLPITLNKFFQPTEMASQDFFQRWKQLSNPQQEVQNIFKAKHPMDTEVTKAKIIGFGSALLEEVDPNPANFVGAGIIHTKTTQIGCLLRLEPNLQAQMYRLTLRTSKEAVSQRLCELLSAQF.

A 1,2-diacyl-sn-glycero-3-phospho-(1D-myo-inositol-3,4,5-trisphosphate) is bound by residues 11-12 (RG), Lys43, Tyr53, and 57-61 (KYVCK). Residues 612-681 (LAKLKKKKGP…AGPPPSSGGS (70 aa)) are disordered. Over residues 646–667 (PASTSAVSTPSPSADLLGLGAA) the composition is skewed to low complexity. Residues 668–677 (PPAPAGPPPS) show a composition bias toward pro residues.

Belongs to the adaptor complexes large subunit family. Adaptor protein complex 2 (AP-2) is a heterotetramer composed of two large adaptins (alpha-type subunit AP2A1 or AP2A2 and beta-type subunit AP2B1), a medium adaptin (mu-type subunit AP2M1) and a small adaptin (sigma-type subunit AP2S1). Binds EPN1, EPS15, AMPH, SNAP91 and BIN1. Interacts with HIP1. Interacts with DGKD. Interacts with DENND1A, DENND1B and DENND1C. Interacts with FCHO1 and DAB2. Interacts with ATAT1; this interaction is required for efficient alpha-tubulin acetylation by ATAT1. Interacts with KIAA1107. Together with AP2B1 and AP2M1, it interacts with ADAM10; this interaction facilitates ADAM10 endocytosis from the plasma membrane during long-term potentiation in hippocampal neurons. Interacts with CLN3 (via dileucine motif). Interacts with ABCB11; this interaction regulates cell membrane expression of ABCB11 through its internalization in a clathrin-dependent manner and its subsequent degradation. Interacts with Cacfd1. Interacts with DNAJC6. In terms of tissue distribution, expressed in the brain (at protein level).

It is found in the cell membrane. The protein resides in the membrane. It localises to the coated pit. Functionally, component of the adaptor protein complex 2 (AP-2). Adaptor protein complexes function in protein transport via transport vesicles in different membrane traffic pathways. Adaptor protein complexes are vesicle coat components and appear to be involved in cargo selection and vesicle formation. AP-2 is involved in clathrin-dependent endocytosis in which cargo proteins are incorporated into vesicles surrounded by clathrin (clathrin-coated vesicles, CCVs) which are destined for fusion with the early endosome. The clathrin lattice serves as a mechanical scaffold but is itself unable to bind directly to membrane components. Clathrin-associated adaptor protein (AP) complexes which can bind directly to both the clathrin lattice and to the lipid and protein components of membranes are considered to be the major clathrin adaptors contributing the CCV formation. AP-2 also serves as a cargo receptor to selectively sort the membrane proteins involved in receptor-mediated endocytosis. AP-2 seems to play a role in the recycling of synaptic vesicle membranes from the presynaptic surface. AP-2 recognizes Y-X-X-[FILMV] (Y-X-X-Phi) and [ED]-X-X-X-L-[LI] endocytosis signal motifs within the cytosolic tails of transmembrane cargo molecules. AP-2 may also play a role in maintaining normal post-endocytic trafficking through the ARF6-regulated, non-clathrin pathway. During long-term potentiation in hippocampal neurons, AP-2 is responsible for the endocytosis of ADAM10. The AP-2 alpha subunit binds polyphosphoinositide-containing lipids, positioning AP-2 on the membrane. The AP-2 alpha subunit acts via its C-terminal appendage domain as a scaffolding platform for endocytic accessory proteins. The AP-2 alpha and AP-2 sigma subunits are thought to contribute to the recognition of the [ED]-X-X-X-L-[LI] motif. The protein is AP-2 complex subunit alpha-2 (AP2A2) of Homo sapiens (Human).